The primary structure comprises 212 residues: Glutathione S-transferase hmp2 (212 aa).

The 80-residue stretch at 1–80 folds into the GST N-terminal domain; sequence MVIKLYGSAM…YLARKYDSGT (80 aa). Glutathione contacts are provided by residues 51–52 and 64–65; these read KV and ES. One can recognise a GST C-terminal domain in the interval 88–212; that stretch reads DHEAYGRFEQ…TWIKATAEAR (125 aa).

Belongs to the GST superfamily.

The catalysed reaction is RX + glutathione = an S-substituted glutathione + a halide anion + H(+). The protein operates within secondary metabolite biosynthesis. Glutathione S-transferase; part of the gene cluster that mediates the biosynthesis of hypothemycin, a resorcylic acid lactone (RAL) that irreversibly inhibits a subset of protein kinases with a conserved cysteine in the ATP binding site such as human ERK2. The first step is performed by both PKSs hmp3 and hmp8 and leads to the production of 7',8'-dehydrozearalenol (DHZ). The highly reducing PKS hpm8 synthesizes the reduced hexaketide (7S,11S,2E,8E)-7,11-dihydroxy-dodeca-2,8-dienoate, which is transferred downstream to the non-reducing PKS hpm3. Hpm3 then extends the reduced hexaketide to a nonaketide, after which regioselective cyclization and macrolactonization affords DHZ. The next step is the conversion of DHZ into aigialomycin C and is performed by the O-methyltransferase hmp5, the FAD-binding monooxygenase hmp7, and the cytochrome P450 monooxygenase hmp1. The wide substrate tolerance of the hmp5 and hmp7 implies that the reactions from DHZ to aigialomycin C can occur in any order. The steps from aigialomycin C to hypothemycin are less well established. The FAD-linked oxidoreductase hmp9 presumably catalyzes oxidation of the C-6' hydroxyl to a ketone. The timing of this oxidation is important, since the resulting enone functional group is a Michael acceptor that can react spontaneously with glutathione, an abundant metabolite in fungal cells. The glutathione S-transferase hmp2 catalyzes cis-trans isomerization of the 7',8' double bond with equilibrium favoring the trans isomer. The hpm6-encoded transporter might preferentially pump hypothemycin out of the cell relative to the trans isomer aigialomycin A. The cis-to-trans isomerization may be coupled with C-4' hydroxylation, since all known hypothemycin analogs containing the enone functional group also have hydroxyl groups at both C-4' and C-5'. The chain is Glutathione S-transferase hmp2 from Hypomyces subiculosus (Nectria subiculosa).